The primary structure comprises 196 residues: Probable malonic semialdehyde reductase RutE (196 aa).

This sequence belongs to the nitroreductase family. HadB/RutE subfamily. Requires FMN as cofactor.

It carries out the reaction 3-hydroxypropanoate + NADP(+) = 3-oxopropanoate + NADPH + H(+). Functionally, may reduce toxic product malonic semialdehyde to 3-hydroxypropionic acid, which is excreted. This chain is Probable malonic semialdehyde reductase RutE, found in Escherichia coli O45:K1 (strain S88 / ExPEC).